The chain runs to 377 residues: Pulmonary surfactant-associated protein B (377 aa).

The signal sequence occupies residues 1–22 (MAKSHLLQWLLLLPTLCCPGAA). Positions 23–191 (ITSASSLECA…PHTQDFSEQQ (169 aa)) are excised as a propeptide. The 41-residue stretch at 24-64 (TSASSLECAQGPQFWCQSLEHAVQCRALGHCLQEVWGHAGA) folds into the Saposin A-type domain. Saposin B-type domains follow at residues 64–146 (ANDL…PRGQ), 195–272 (PLPF…STED), and 291–366 (QDTE…EAPA). 9 disulfides stabilise this stretch: C68-C142, C71-C136, C99-C111, C199-C268, C202-C262, C226-C237, C295-C362, C298-C356, and C321-C331. A propeptide spanning residues 271 to 377 (EDAMGPALPA…PLQCFQTPHL (107 aa)) is cleaved from the precursor. N307 is a glycosylation site (N-linked (GlcNAc...) asparagine).

Homodimer; disulfide-linked.

The protein localises to the secreted. It is found in the extracellular space. Its subcellular location is the surface film. In terms of biological role, pulmonary surfactant-associated proteins promote alveolar stability by lowering the surface tension at the air-liquid interface in the peripheral air spaces. SP-B increases the collapse pressure of palmitic acid to nearly 70 millinewtons per meter. This Mus musculus (Mouse) protein is Pulmonary surfactant-associated protein B (Sftpb).